A 300-amino-acid polypeptide reads, in one-letter code: Transcription elongation factor A protein 2 (300 aa).

Positions 6–83 (EEIARIARRL…KSWKKLLDAS (78 aa)) constitute a TFIIS N-terminal domain. Residue Lys58 forms a Glycyl lysine isopeptide (Lys-Gly) (interchain with G-Cter in ubiquitin) linkage. A phosphoserine mark is found at Ser60 and Ser101. Positions 84–131 (DAKARERRRGGSLPTSSSKEASEAQDPSRKRPELPRMPSTPRITTFPP) are disordered. The segment covering 103–117 (EASEAQDPSRKRPEL) has biased composition (basic and acidic residues). The TFIIS central domain occupies 139-255 (VRTKCREMLT…EHQMARTGGT (117 aa)). The TFIIS-type zinc finger occupies 258–298 (DLFTCGKCRKKNCTYTQVQTRSSDEPMTTFVVCNECGNRWK). Zn(2+) is bound by residues Cys262, Cys265, Cys290, and Cys293.

Belongs to the TFS-II family. Interacts with the basal transcription factor GTF2B. Interacts with REXO1.

The protein resides in the nucleus. Functionally, necessary for efficient RNA polymerase II transcription elongation past template-encoded arresting sites. The arresting sites in DNA have the property of trapping a certain fraction of elongating RNA polymerases that pass through, resulting in locked ternary complexes. Cleavage of the nascent transcript by S-II allows the resumption of elongation from the new 3'-terminus. In Bos taurus (Bovine), this protein is Transcription elongation factor A protein 2 (TCEA2).